A 362-amino-acid polypeptide reads, in one-letter code: Peptide chain release factor 1 (362 aa).

Gln237 carries the N5-methylglutamine modification. Residues 289 to 308 form a disordered region; the sequence is AAEISDTRRNLLGSGDRSDR.

Belongs to the prokaryotic/mitochondrial release factor family. In terms of processing, methylated by PrmC. Methylation increases the termination efficiency of RF1.

It is found in the cytoplasm. Its function is as follows. Peptide chain release factor 1 directs the termination of translation in response to the peptide chain termination codons UAG and UAA. This chain is Peptide chain release factor 1, found in Vibrio cholerae serotype O1 (strain ATCC 39541 / Classical Ogawa 395 / O395).